The primary structure comprises 763 residues: Protein translocase subunit SecA 2 (763 aa).

ATP-binding positions include Gln-83, 101 to 105 (GEGKT), and Asp-490.

It belongs to the SecA family. In terms of assembly, monomer and homodimer. Part of the essential Sec protein translocation apparatus which comprises SecA, SecYEG and auxiliary proteins SecDF. Other proteins may also be involved.

Its subcellular location is the cell membrane. It is found in the cytoplasm. It catalyses the reaction ATP + H2O + cellular proteinSide 1 = ADP + phosphate + cellular proteinSide 2.. In terms of biological role, part of the Sec protein translocase complex. Interacts with the SecYEG preprotein conducting channel. Has a central role in coupling the hydrolysis of ATP to the transfer of proteins into and across the cell membrane, serving as an ATP-driven molecular motor driving the stepwise translocation of polypeptide chains across the membrane. This is Protein translocase subunit SecA 2 from Corynebacterium glutamicum (strain R).